Reading from the N-terminus, the 160-residue chain is Protein P5 (160 aa).

A helical membrane pass occupies residues 7–23 (FLATAAALGVAMFPTQI).

The protein localises to the virion membrane. The chain is Protein P5 (V) from Pseudoalteromonas espejiana (Bacteriophage PM2).